A 629-amino-acid polypeptide reads, in one-letter code: Embryonic polyadenylate-binding protein (629 aa).

RRM domains are found at residues 11 to 89, 99 to 175, 191 to 268, and 294 to 370; these read ASLY…WSQR, GNVF…HFKS, TNVY…RAQK, and VNLY…LAQR. One can recognise a PABC domain in the interval 539–616; the sequence is QEPLTASSLA…AVAVLQAHQA (78 aa).

It belongs to the polyadenylate-binding protein type-1 family. In terms of assembly, interacts with dazl in an RNA-independent manner. The C-terminus can self-associate and also interact with the C-terminus of pabpc1, independently of RNA. RRM 1 and RRM 2 interact with both eif4g1 and paip1, and the C-terminus also interacts with paip1. Prior to oocyte maturation, found in a complex with dazl and pum2 proteins and spdy1 mRNA; pum2 dissociates from the complex during maturation. Interacts with the translation termination factor sup35/erf3.

The protein resides in the cytoplasm. Functionally, binds and protects the poly(A) tail of mRNA with or without an AU-rich element (ARE) and prevents mRNA deadenylation. Stimulates the translation of mRNAs to which it is bound during early development. This is Embryonic polyadenylate-binding protein from Xenopus tropicalis (Western clawed frog).